Reading from the N-terminus, the 540-residue chain is Probable quinate permease (540 aa).

Over 1 to 22 the chain is Cytoplasmic; the sequence is MSILALVEDRPTPKEVYNWRIY. The chain crosses the membrane as a helical span at residues 23 to 43; sequence LLAAVASFTSCMIGYDSAFIG. The Extracellular portion of the chain corresponds to 44 to 74; the sequence is TTLALGSFREEFEFTTMEPAAVNRVSANIVS. Residues 75 to 95 form a helical membrane-spanning segment; that stretch reads CYQAGAFFGAFFAYPIGHFWG. Over 96 to 97 the chain is Cytoplasmic; it reads RK. The chain crosses the membrane as a helical span at residues 98 to 118; that stretch reads WGLLSAAAIFTLGAGLMLGAN. Residues 119 to 130 lie on the Extracellular side of the membrane; the sequence is GDRGLGLIYGGR. The helical transmembrane segment at 131–151 threads the bilayer; the sequence is VLAGIGVGAGSNITPIYISEL. Over 152 to 157 the chain is Cytoplasmic; it reads APPSIR. Residues 158–178 traverse the membrane as a helical segment; it reads GHLVGVYELGWQIGGLVGFWI. Over 179 to 193 the chain is Extracellular; sequence NYGVSETLAPSHKQW. The chain crosses the membrane as a helical span at residues 194–214; sequence IIPFAVQLIPSGLLLIGAVFL. At 215 to 285 the chain is on the cytoplasmic side; it reads RESPRWLFSS…AGTNKKVMYR (71 aa). Residues 286 to 306 form a helical membrane-spanning segment; that stretch reads LFLGSMLFFWQNGSGINAINY. The Extracellular portion of the chain corresponds to 307–325; the sequence is YSPTVFKSIGLRGTNTGMF. Residues 326-346 traverse the membrane as a helical segment; sequence STGIFGVVKTVVTFIWLLYLI. Residues 347 to 352 are Cytoplasmic-facing; sequence DRMGRR. The helical transmembrane segment at 353-373 threads the bilayer; that stretch reads LLLLVGAAGASVCLWIVGAYI. The Extracellular segment spans residues 374 to 387; it reads KIANPAKNGNGEMT. A helical membrane pass occupies residues 388-408; sequence GGGIAAMFFFYLYTVFYTPSW. Residues 409–456 lie on the Cytoplasmic side of the membrane; the sequence is NGTPWVMNSEMFEPNMRSLAQACAAASNWLWNFLISRFTPQMFDKMGY. The helical transmembrane segment at 457-477 threads the bilayer; it reads GVWFFFASLMLCSIVIVFFLI. Over 478–540 the chain is Extracellular; it reads PETKGIPLES…RLESVQPKEA (63 aa). The interval 519–540 is disordered; it reads IEESGYTKSGEQRLESVQPKEA. Residues 528 to 540 show a composition bias toward basic and acidic residues; sequence GEQRLESVQPKEA.

It belongs to the major facilitator superfamily. Sugar transporter (TC 2.A.1.1) family. Interacts with creB. Post-translationally, ubiquitinated. Deubiquitinated by creB, probably to control its activity or amount.

It is found in the cell membrane. Functionally, integral membrane transporter that imports quinic acid to be catabolized as a carbon source. This chain is Probable quinate permease (qutD), found in Aspergillus clavatus (strain ATCC 1007 / CBS 513.65 / DSM 816 / NCTC 3887 / NRRL 1 / QM 1276 / 107).